The following is a 374-amino-acid chain: Phenoloxidase-activating enzyme 1 (374 aa).

The first 19 residues, 1–19 (MWKSLVFFVSALIWSFGSS), serve as a signal peptide directing secretion. Residues 20–120 (QDCTTPTGSR…QCGIDTTGDR (101 aa)) constitute a propeptide, activation peptide. The 54-residue stretch at 21 to 74 (DCTTPTGSRSNCVSLYQCQPLYNAFEQRPLPTHVVSYLGRSQCGFEGYVPRVCC) folds into the Clip domain. Intrachain disulfides connect Cys22-Cys73, Cys32-Cys63, and Cys38-Cys74. Positions 83 to 97 (ATSARPTQAPTQGSS) are enriched in polar residues. The interval 83-114 (ATSARPTQAPTQGSSDVFPEDSSPAPRNQCGI) is disordered. Residues 121–370 (VYGGTITDLD…YIDWIQNTIA (250 aa)) form the Peptidase S1 domain. Cys151 and Cys167 are joined by a disulfide. His166 acts as the Charge relay system in catalysis. Residues Glu186 and Asp194 each coordinate Ca(2+). Asp228 acts as the Charge relay system in catalysis. Intrachain disulfides connect Cys292-Cys307 and Cys317-Cys346. The active-site Charge relay system is Ser321.

Belongs to the peptidase S1 family. CLIP subfamily. Post-translationally, activated by the removal of the N-terminal inhibitory propeptide. In terms of tissue distribution, expressed in hemocytes.

It localises to the secreted. With respect to regulation, inhibited by aprotenin. Not inhibited by EDTA, PMSF or leupeptin. Its function is as follows. Serine protease which, by cleaving and activating prophenoloxidase (PPO1) after immune challenge, plays an essential role in the melanization immune response to wounding. This chain is Phenoloxidase-activating enzyme 1, found in Spodoptera litura (Asian cotton leafworm).